We begin with the raw amino-acid sequence, 342 residues long: Protein FDO1 (342 aa).

Disordered stretches follow at residues methionine 1 to aspartate 36, methionine 57 to valine 76, and glycine 299 to threonine 322. Polar residues predominate over residues alanine 15–glutamate 25. A compositionally biased stretch (basic and acidic residues) spans asparagine 308–glycine 319.

As to quaternary structure, interacts with FKH1.

In concert with FKH1, plays a role in directionality of mating type switching by controlling which donor mating-type locus is inserted into MAT locus during mating type switching. This is Protein FDO1 from Saccharomyces cerevisiae (strain ATCC 204508 / S288c) (Baker's yeast).